Here is a 989-residue protein sequence, read N- to C-terminus: E3 ubiquitin-protein ligase Arkadia (989 aa).

Residues Lys19, Lys33, Lys46, Lys58, Lys72, Lys86, Lys95, and Lys109 each participate in a glycyl lysine isopeptide (Lys-Gly) (interchain with G-Cter in SUMO2) cross-link. The segment at 63-195 (FSHLCDDSQK…TEADPVPSLL (133 aa)) is disordered. Residues 65 to 88 (HLCDDSQKQEKDMTGNQQEQEKSG) show a composition bias toward basic and acidic residues. Polar residues predominate over residues 97–109 (QQAGPSYVQNCVK). The segment covering 110–120 (ENQEILGRRQQ) has biased composition (basic and acidic residues). Low complexity predominate over residues 131 to 144 (SSLSECLSSPSSSL). Lys172 is covalently cross-linked (Glycyl lysine isopeptide (Lys-Gly) (interchain with G-Cter in SUMO2)). The span at 173–183 (SRSHSARSHKW) shows a compositional bias: basic residues. Residues Lys197 and Lys217 each participate in a glycyl lysine isopeptide (Lys-Gly) (interchain with G-Cter in SUMO2) cross-link. The tract at residues 213-293 (KRLVKSSSSQ…PSNPAAPSGS (81 aa)) is disordered. Residues 240-402 (ALAQRKYALL…VPTTSARMDS (163 aa)) form an interaction with AXIN1 region. Composition is skewed to low complexity over residues 248-270 (LLSS…SSST) and 278-291 (ASAS…AAPS). The SUMO interaction motif 1 (SIM) signature appears at 298 to 302 (VVVIE). Positions 323-329 (EVEIVTV) match the SUMO interaction motif 2 (SIM) motif. Residues 335-367 (SRSTLGHSRSHWSQGSSSHTGRPQESRNRSRIS) form a disordered region. A compositionally biased stretch (low complexity) spans 345–355 (HWSQGSSSHTG). The short motif at 380 to 384 (VVDLT) is the SUMO interaction motif 3 (SIM) element. Disordered stretches follow at residues 388–475 (DEPT…MPRL), 506–559 (HGHH…YHDQ), and 641–675 (MPPP…PPPQ). A compositionally biased stretch (polar residues) spans 393-451 (VPTTSARMDSQTTSASINNSNPSTSEQASDTTSTVASSQPSTVSETEATLTSNSATGSS). Basic residues predominate over residues 506–520 (HGHHFQHHHHHHHTP). Positions 548-558 (ANSSSGSSYHD) are enriched in polar residues. The segment at 902-904 (YPH) is ubiquitin binding. Residues Lys918 and Lys922 each participate in a glycyl lysine isopeptide (Lys-Gly) (interchain with G-Cter in SUMO2) cross-link. Zn(2+)-binding residues include Cys937 and Cys940. The RING-type; atypical zinc-finger motif lies at 937 to 978 (CTICLSILEEGEDVRRLPCMHLFHQVCVDQWLITNKKCPICR). Residues 952-956 (RLPCM) are ubiquitin binding. The Zn(2+) site is built by His960 and Cys963.

Belongs to the Arkadia family. In terms of assembly, monomer. Interacts with SMAD6, SMAD7, AXIN1, AXIN2 and SKIL isoform SNON. Interacts with (phosphorylated) SMAD2 and SMAD3. Part of a complex containing RNF111, AXIN1 and SMAD7. Interacts (via SIM domains) with SUMO1 and SUMO2. In terms of tissue distribution, ubiquitously expressed.

It is found in the nucleus. The protein localises to the cytoplasm. Its subcellular location is the PML body. The catalysed reaction is S-ubiquitinyl-[E2 ubiquitin-conjugating enzyme]-L-cysteine + [acceptor protein]-L-lysine = [E2 ubiquitin-conjugating enzyme]-L-cysteine + N(6)-ubiquitinyl-[acceptor protein]-L-lysine.. The protein operates within protein modification; protein ubiquitination. Its activity is regulated as follows. Binds free ubiquitin non-covalently via its RING-type zinc finger. Ubiquitin-binding leads to enhance the E3 ubiquitin-protein ligase activity by stabilizing the ubiquitin-conjugating enzyme E2 (donor ubiquitin) in the 'closed' conformation and activating ubiquitin transfer. E3 ubiquitin-protein ligase required for mesoderm patterning during embryonic development. Acts as an enhancer of the transcriptional responses of the SMAD2/SMAD3 effectors, which are activated downstream of BMP. Acts by mediating ubiquitination and degradation of SMAD inhibitors such as SMAD7, inducing their proteasomal degradation and thereby enhancing the transcriptional activity of TGF-beta and BMP. In addition to enhance transcription of SMAD2/SMAD3 effectors, also regulates their turnover by mediating their ubiquitination and subsequent degradation, coupling their activation with degradation, thereby ensuring that only effectors 'in use' are degraded. Activates SMAD3/SMAD4-dependent transcription by triggering signal-induced degradation of SNON isoform of SKIL. Associates with UBE2D2 as an E2 enzyme. Specifically binds polysumoylated chains via SUMO interaction motifs (SIMs) and mediates ubiquitination of sumoylated substrates. Catalyzes 'Lys-63'-linked ubiquitination of sumoylated XPC in response to UV irradiation, promoting nucleotide excision repair. Mediates ubiquitination and degradation of sumoylated PML. The regulation of the BMP-SMAD signaling is however independent of sumoylation and is not dependent of SUMO interaction motifs (SIMs). The chain is E3 ubiquitin-protein ligase Arkadia from Mus musculus (Mouse).